The chain runs to 769 residues: Phosphoribosylformylglycinamidine synthase subunit PurL (769 aa).

The segment covering 1–13 (MTGTPSAPTTSPD) has biased composition (polar residues). The segment at 1–30 (MTGTPSAPTTSPDDQADGPGEGTVDRQPYR) is disordered. Histidine 65 is a catalytic residue. Residues tyrosine 68 and lysine 109 each coordinate ATP. A Mg(2+)-binding site is contributed by glutamate 111. Substrate contacts are provided by residues 112–115 (SHNH) and arginine 134. Residue histidine 113 is the Proton acceptor of the active site. Position 135 (aspartate 135) interacts with Mg(2+). Glutamine 260 provides a ligand contact to substrate. Aspartate 288 lines the Mg(2+) pocket. 337–339 (ESQ) lines the substrate pocket. Residues asparagine 524 and glycine 561 each coordinate ATP. Residue asparagine 562 coordinates Mg(2+). Serine 564 serves as a coordination point for substrate.

The protein belongs to the FGAMS family. In terms of assembly, monomer. Part of the FGAM synthase complex composed of 1 PurL, 1 PurQ and 2 PurS subunits.

It is found in the cytoplasm. The enzyme catalyses N(2)-formyl-N(1)-(5-phospho-beta-D-ribosyl)glycinamide + L-glutamine + ATP + H2O = 2-formamido-N(1)-(5-O-phospho-beta-D-ribosyl)acetamidine + L-glutamate + ADP + phosphate + H(+). It participates in purine metabolism; IMP biosynthesis via de novo pathway; 5-amino-1-(5-phospho-D-ribosyl)imidazole from N(2)-formyl-N(1)-(5-phospho-D-ribosyl)glycinamide: step 1/2. Functionally, part of the phosphoribosylformylglycinamidine synthase complex involved in the purines biosynthetic pathway. Catalyzes the ATP-dependent conversion of formylglycinamide ribonucleotide (FGAR) and glutamine to yield formylglycinamidine ribonucleotide (FGAM) and glutamate. The FGAM synthase complex is composed of three subunits. PurQ produces an ammonia molecule by converting glutamine to glutamate. PurL transfers the ammonia molecule to FGAR to form FGAM in an ATP-dependent manner. PurS interacts with PurQ and PurL and is thought to assist in the transfer of the ammonia molecule from PurQ to PurL. The protein is Phosphoribosylformylglycinamidine synthase subunit PurL of Parafrankia sp. (strain EAN1pec).